The following is a 950-amino-acid chain: UvrABC system protein A (950 aa).

36 to 43 lines the ATP pocket; the sequence is GKSGSGKS. A C4-type zinc finger spans residues 260–287; the sequence is CPLCGFSLPLIEPRLFSFNSPFGACSEC. 2 ABC transporter domains span residues 317–599 and 619–947; these read FKTS…KNSL and ADKG…MFLK. 651–658 serves as a coordination point for ATP; it reads GVSGSGKS. Residues 750–776 form a C4-type zinc finger; that stretch reads CEKCQGDGYLNIQMHFLPDVFVPCDLC.

It belongs to the ABC transporter superfamily. UvrA family. In terms of assembly, forms a heterotetramer with UvrB during the search for lesions.

The protein resides in the cytoplasm. The UvrABC repair system catalyzes the recognition and processing of DNA lesions. UvrA is an ATPase and a DNA-binding protein. A damage recognition complex composed of 2 UvrA and 2 UvrB subunits scans DNA for abnormalities. When the presence of a lesion has been verified by UvrB, the UvrA molecules dissociate. This Borreliella burgdorferi (strain ATCC 35210 / DSM 4680 / CIP 102532 / B31) (Borrelia burgdorferi) protein is UvrABC system protein A.